A 51-amino-acid polypeptide reads, in one-letter code: uncharacterized protein (51 aa).

Residues 3–30 are a coiled coil; it reads EEKAVSLAKEIIELDIKRDEMLETFMQL.

This is an uncharacterized protein from Bacillus subtilis (strain 168).